Here is a 65-residue protein sequence, read N- to C-terminus: MRCLSIFVLLVLLVSFAVAELDVEGEIVKQLLTRGTLKDADFWKRLEMQGCVCNANAKFCCGEGR.

The first 19 residues, 1–19 (MRCLSIFVLLVLLVSFAVA), serve as a signal peptide directing secretion. Residues 20-48 (ELDVEGEIVKQLLTRGTLKDADFWKRLEM) constitute a propeptide that is removed on maturation. Gln-49 carries the pyrrolidone carboxylic acid modification. Disulfide bonds link Cys-51–Cys-60 and Cys-53–Cys-61. Glutamic acid 1-amide is present on Glu-63.

As to expression, expressed by the venom duct.

The protein resides in the secreted. Functionally, probable neurotoxin with unknown target. Possibly targets ion channels. The protein is Conotoxin Cal16.1 of Californiconus californicus (California cone).